The chain runs to 114 residues: Large ribosomal subunit protein uL18 (114 aa).

This sequence belongs to the universal ribosomal protein uL18 family. In terms of assembly, part of the 50S ribosomal subunit; part of the 5S rRNA/L5/L18/L25 subcomplex. Contacts the 5S and 23S rRNAs.

In terms of biological role, this is one of the proteins that bind and probably mediate the attachment of the 5S RNA into the large ribosomal subunit, where it forms part of the central protuberance. In Bacteroides thetaiotaomicron (strain ATCC 29148 / DSM 2079 / JCM 5827 / CCUG 10774 / NCTC 10582 / VPI-5482 / E50), this protein is Large ribosomal subunit protein uL18.